Reading from the N-terminus, the 92-residue chain is UPF0213 protein M28_Spy1146 (92 aa).

In terms of domain architecture, GIY-YIG spans 4 to 80; that stretch reads KKAYMYVLEC…KRKTRSQKLA (77 aa).

Belongs to the UPF0213 family.

In Streptococcus pyogenes serotype M28 (strain MGAS6180), this protein is UPF0213 protein M28_Spy1146.